A 152-amino-acid polypeptide reads, in one-letter code: MRGPGHPLLLGLLLVLGAAGRGRGGAEPREPADGQALLRLVVELVQELRKHHSAEHKGLQLLGRDCALGRAEAAGLGPSPEQRVEIVPRDLRMKDKFLKHLTGPLYFSPKCSKHFHRLYHNTRDCTIPAYYKRCARLLTRLAVSPVCMEDKQ.

The first 24 residues, methionine 1–glycine 24, serve as a signal peptide directing secretion. 2 disulfides stabilise this stretch: cysteine 111-cysteine 147 and cysteine 125-cysteine 134.

Belongs to the ALKAL family. Homodimer; interchain disulfide bond is not required for homodimerization. Widely expressed with highest levels in adrenal gland and modest levels in pancreas, testis and uterus.

The protein resides in the secreted. It is found in the cell membrane. In terms of biological role, cytokine that acts as a physiological ligand for receptor tyrosine kinases LTK and ALK, leading to their activation. Cytokine-binding is sufficient to activate LTK. In contrast, ALKAL2-driven activation of ALK is coupled with heparin-binding to ALK. Stimulation of ALK signaling is involved in neural development and regulation of energy expenditure. The polypeptide is ALK and LTK ligand 2 (Homo sapiens (Human)).